Consider the following 291-residue polypeptide: Potassium-transporting ATPase subunit beta (291 aa).

At 1–36 (MAALQEKKTCGQRMEEFQRYCWNPDTGQMLGRTLSR) the chain is on the cytoplasmic side. A helical; Signal-anchor for type II membrane protein membrane pass occupies residues 37-57 (WVWISLYYVAFYVVMTGLFAL). Residues 58–291 (CLYVLMQTVD…KVEFKLKIEK (234 aa)) lie on the Extracellular side of the membrane. N-linked (GlcNAc...) asparagine glycosylation is found at N99, N103, N130, N146, and N161. C131 and C152 are joined by a disulfide. A disulfide bridge connects residues C162 and C178. N-linked (GlcNAc...) asparagine glycans are attached at residues N193 and N222. Residues 194 to 291 (GSAPRVDCAF…KVEFKLKIEK (98 aa)) are immunoglobulin-like. C201 and C263 are joined by a disulfide.

This sequence belongs to the X(+)/potassium ATPases subunit beta family. The ATPase pump is composed of two subunits: alpha (catalytic) and beta (regulatory). Interacts with alpha subunit ATP12A; this interaction is required for the formation of a functionally active pump and targeting at the plasma membrane. Interacts (via N-terminus) with alpha subunit ATP4A (via the P-domain). N-glycosylation is necessary for assembly and functional expression of the pump at the plasma membrane.

It is found in the apical cell membrane. The protein resides in the cell membrane. The beta subunit of the gastric H(+)/K(+) ATPase pump which transports H(+) ions in exchange for K(+) ions across the apical membrane of parietal cells. Plays a structural and regulatory role in the assembly and membrane targeting of a functionally active pump. Within a transport cycle, the transfer of a H(+) ion across the membrane is coupled to ATP hydrolysis and is associated with a transient phosphorylation of the alpha subunit that shifts the pump conformation from inward-facing (E1) to outward-facing state (E2). Interacts with the phosphorylation domain of the alpha subunit and functions as a ratchet, stabilizing the lumenal-open E2 conformation and preventing the reverse reaction of the transport cycle. The protein is Potassium-transporting ATPase subunit beta of Homo sapiens (Human).